The following is a 93-amino-acid chain: Envelope small membrane protein (93 aa).

Residues 1–11 are Virion surface-facing; sequence MMNLLNKSLEE. A helical transmembrane segment spans residues 12-32; that stretch reads NGSVLTAFYIFVAFVALYLLG. Residues 33–93 are Intravirion-facing; it reads RALQAFVQAA…NEFPKNGWKQ (61 aa).

Belongs to the gammacoronaviruses E protein family. As to quaternary structure, homooligomer. Interacts with the M membrane protein in the budding compartment of the host cell, which is located between endoplasmic reticulum and the Golgi complex. The cytoplasmic tails of both proteins are important for this function. Interacts with Nucleoprotein.

It localises to the host Golgi apparatus membrane. Its function is as follows. Plays a central role in virus morphogenesis and assembly. Acts as a viroporin and self-assembles in host membranes forming pentameric protein-lipid pores that allow ion transport. Also plays a role in the induction of apoptosis. The protein is Envelope small membrane protein of Avian infectious bronchitis virus (strain Portugal/322/82) (IBV).